Consider the following 440-residue polypeptide: Transposon Ty1-OL Gag polyprotein (440 aa).

3 stretches are compositionally biased toward polar residues: residues 1–23 (MESQQLSNYPQISHGSACASVTS), 48–60 (TKANSQQTTTPAS), and 127–152 (QSQFPQYPSSVGTPLSTPSPESGNTF). Disordered regions lie at residues 1–93 (MESQ…MMTQ), 126–173 (PQSQ…RPPP), and 352–440 (GSRN…PGTY). Low complexity predominate over residues 153–165 (TDSSSADSDMTST). An RNA-binding region spans residues 299–401 (NNGIHINNKV…NSKSKTARAH (103 aa)). Residues 402-418 (NVSTSNNSPSTDNDSIS) show a composition bias toward low complexity. A Phosphoserine modification is found at serine 416. A compositionally biased stretch (polar residues) spans 419 to 428 (KSTTEPIQLN). A compositionally biased stretch (basic and acidic residues) spans 429–440 (NKHDLHLRPGTY).

As to quaternary structure, homotrimer.

The protein resides in the cytoplasm. Its function is as follows. Capsid protein (CA) is the structural component of the virus-like particle (VLP), forming the shell that encapsulates the retrotransposons dimeric RNA genome. The particles are assembled from trimer-clustered units and there are holes in the capsid shells that allow for the diffusion of macromolecules. CA also has nucleocapsid-like chaperone activity, promoting primer tRNA(i)-Met annealing to the multipartite primer-binding site (PBS), dimerization of Ty1 RNA and initiation of reverse transcription. The polypeptide is Transposon Ty1-OL Gag polyprotein (TY1A-OL) (Saccharomyces cerevisiae (strain ATCC 204508 / S288c) (Baker's yeast)).